Reading from the N-terminus, the 383-residue chain is Succinyl-diaminopimelate desuccinylase (383 aa).

Residue histidine 73 coordinates Zn(2+). Aspartate 75 is a catalytic residue. Residue aspartate 107 coordinates Zn(2+). The active-site Proton acceptor is glutamate 141. The Zn(2+) site is built by glutamate 142, glutamate 170, and histidine 356.

This sequence belongs to the peptidase M20A family. DapE subfamily. Homodimer. Zn(2+) is required as a cofactor. It depends on Co(2+) as a cofactor.

The enzyme catalyses N-succinyl-(2S,6S)-2,6-diaminopimelate + H2O = (2S,6S)-2,6-diaminopimelate + succinate. It functions in the pathway amino-acid biosynthesis; L-lysine biosynthesis via DAP pathway; LL-2,6-diaminopimelate from (S)-tetrahydrodipicolinate (succinylase route): step 3/3. In terms of biological role, catalyzes the hydrolysis of N-succinyl-L,L-diaminopimelic acid (SDAP), forming succinate and LL-2,6-diaminopimelate (DAP), an intermediate involved in the bacterial biosynthesis of lysine and meso-diaminopimelic acid, an essential component of bacterial cell walls. The sequence is that of Succinyl-diaminopimelate desuccinylase from Pseudomonas putida (strain GB-1).